The primary structure comprises 294 residues: Tryptophan 2,3-dioxygenase (294 aa).

Residues 63–67 (FIIQH), Y125, and R129 each bind substrate. Position 252 (H252) interacts with heme. Residue T266 coordinates substrate.

This sequence belongs to the tryptophan 2,3-dioxygenase family. Homotetramer. Requires heme as cofactor.

It carries out the reaction L-tryptophan + O2 = N-formyl-L-kynurenine. It functions in the pathway amino-acid degradation; L-tryptophan degradation via kynurenine pathway; L-kynurenine from L-tryptophan: step 1/2. Functionally, heme-dependent dioxygenase that catalyzes the oxidative cleavage of the L-tryptophan (L-Trp) pyrrole ring and converts L-tryptophan to N-formyl-L-kynurenine. Catalyzes the oxidative cleavage of the indole moiety. In Polaromonas sp. (strain JS666 / ATCC BAA-500), this protein is Tryptophan 2,3-dioxygenase.